Here is a 221-residue protein sequence, read N- to C-terminus: tRNA (guanine-N(7)-)-methyltransferase (221 aa).

Residues E46, D71, and D120 each coordinate S-adenosyl-L-methionine. D120 is an active-site residue. D156 is a binding site for substrate.

It belongs to the class I-like SAM-binding methyltransferase superfamily. TrmB family.

The catalysed reaction is guanosine(46) in tRNA + S-adenosyl-L-methionine = N(7)-methylguanosine(46) in tRNA + S-adenosyl-L-homocysteine. The protein operates within tRNA modification; N(7)-methylguanine-tRNA biosynthesis. In terms of biological role, catalyzes the formation of N(7)-methylguanine at position 46 (m7G46) in tRNA. This chain is tRNA (guanine-N(7)-)-methyltransferase, found in Cytophaga hutchinsonii (strain ATCC 33406 / DSM 1761 / CIP 103989 / NBRC 15051 / NCIMB 9469 / D465).